We begin with the raw amino-acid sequence, 1359 residues long: DNA-directed RNA polymerase subunit beta (1359 aa).

It belongs to the RNA polymerase beta chain family. The RNAP catalytic core consists of 2 alpha, 1 beta, 1 beta' and 1 omega subunit. When a sigma factor is associated with the core the holoenzyme is formed, which can initiate transcription.

It catalyses the reaction RNA(n) + a ribonucleoside 5'-triphosphate = RNA(n+1) + diphosphate. Its function is as follows. DNA-dependent RNA polymerase catalyzes the transcription of DNA into RNA using the four ribonucleoside triphosphates as substrates. The protein is DNA-directed RNA polymerase subunit beta of Nitrosomonas eutropha (strain DSM 101675 / C91 / Nm57).